The primary structure comprises 509 residues: ATP synthase subunit alpha (509 aa).

171–178 lines the ATP pocket; it reads GDRKTGKT.

This sequence belongs to the ATPase alpha/beta chains family. As to quaternary structure, F-type ATPases have 2 components, CF(1) - the catalytic core - and CF(0) - the membrane proton channel. CF(1) has five subunits: alpha(3), beta(3), gamma(1), delta(1), epsilon(1). CF(0) has three main subunits: a(1), b(2) and c(9-12). The alpha and beta chains form an alternating ring which encloses part of the gamma chain. CF(1) is attached to CF(0) by a central stalk formed by the gamma and epsilon chains, while a peripheral stalk is formed by the delta and b chains.

The protein localises to the cell inner membrane. It carries out the reaction ATP + H2O + 4 H(+)(in) = ADP + phosphate + 5 H(+)(out). In terms of biological role, produces ATP from ADP in the presence of a proton gradient across the membrane. The alpha chain is a regulatory subunit. This Ehrlichia canis (strain Jake) protein is ATP synthase subunit alpha.